Consider the following 471-residue polypeptide: 1,3-beta-glucanosyltransferase GAS4 (471 aa).

Residues 1–21 form the signal peptide; sequence MMVFSSTFIFLILELVVLCEA. Residues C70 and C99 are joined by a disulfide bond. A (1,3-beta-D-glucosyl)n-binding site is contributed by Y88. A glycan (N-linked (GlcNAc...) asparagine) is linked at N151. (1,3-beta-D-glucosyl)n contacts are provided by N160, E161, D203, and R208. Catalysis depends on E161, which acts as the Proton donor. 2 cysteine pairs are disulfide-bonded: C217–C354 and C238–C269. E266 functions as the Nucleophile in the catalytic mechanism. Residue Y298 participates in (1,3-beta-D-glucosyl)n binding. The N-linked (GlcNAc...) asparagine glycan is linked to N398. The GPI-anchor amidated asparagine moiety is linked to residue N447. Residues 448–471 constitute a propeptide, removed in mature form; sequence SASISGPLLPLGLCLLFFTFSLFF.

The protein belongs to the glycosyl hydrolase 72 family.

The protein resides in the cell membrane. Functionally, splits internally a 1,3-beta-glucan molecule and transfers the newly generated reducing end (the donor) to the non-reducing end of another 1,3-beta-glucan molecule (the acceptor) forming a 1,3-beta linkage, resulting in the elongation of 1,3-beta-glucan chains in the cell wall. Involved in spore wall assembly. This is 1,3-beta-glucanosyltransferase GAS4 (GAS4) from Saccharomyces cerevisiae (strain ATCC 204508 / S288c) (Baker's yeast).